The chain runs to 648 residues: p-hydroxybenzoic acid efflux pump subunit AaeB (648 aa).

11 helical membrane passes run 11–31, 41–61, 65–87, 91–110, 125–145, 150–170, 369–389, 406–426, 430–450, 458–478, and 481–501; these read FACKLTLASVLSLLLGFYFGL, AALVAAAPAFAAGGEPFSGAI, GWLRIIGTVLGSLCALLLMMLLI, LLMILLCCLWAGVCTWLSSL, TALIIVVSCLGEPQFILQLAL, EIVLGIVCAVLVDTLLAPRSV, LFWLWSGWSAGSGCMIMIAVV, FLMGSLVALPVGALYYTLILP, QSLVLLCLSLGALTFICGMAV, MGTLASTLNILALSNPMGFPI, and FVDSAIGQMVGCLLALVVLLV.

The protein belongs to the aromatic acid exporter ArAE (TC 2.A.85) family.

It localises to the cell inner membrane. Functionally, forms an efflux pump with AaeA. Could function as a metabolic relief valve, allowing to eliminate certain compounds when they accumulate to high levels in the cell. This Edwardsiella ictaluri (strain 93-146) protein is p-hydroxybenzoic acid efflux pump subunit AaeB.